Reading from the N-terminus, the 421-residue chain is Imidazolonepropionase (421 aa).

Fe(3+)-binding residues include H81 and H83. Positions 81 and 83 each coordinate Zn(2+). 4-imidazolone-5-propanoate contacts are provided by R90, Y153, and H186. Y153 is an N-formimidoyl-L-glutamate binding site. Residue H251 coordinates Fe(3+). H251 serves as a coordination point for Zn(2+). E254 lines the 4-imidazolone-5-propanoate pocket. D326 contributes to the Fe(3+) binding site. D326 contributes to the Zn(2+) binding site. N-formimidoyl-L-glutamate contacts are provided by N328 and G330. Position 331 (S331) interacts with 4-imidazolone-5-propanoate.

The protein belongs to the metallo-dependent hydrolases superfamily. HutI family. Zn(2+) is required as a cofactor. It depends on Fe(3+) as a cofactor.

It localises to the cytoplasm. The catalysed reaction is 4-imidazolone-5-propanoate + H2O = N-formimidoyl-L-glutamate. Its pathway is amino-acid degradation; L-histidine degradation into L-glutamate; N-formimidoyl-L-glutamate from L-histidine: step 3/3. Catalyzes the hydrolytic cleavage of the carbon-nitrogen bond in imidazolone-5-propanoate to yield N-formimidoyl-L-glutamate. It is the third step in the universal histidine degradation pathway. The protein is Imidazolonepropionase of Streptococcus pyogenes serotype M12 (strain MGAS2096).